An 861-amino-acid chain; its full sequence is Protein argonaute-4 (861 aa).

The 120-residue stretch at Pro-219–Ala-338 folds into the PAZ domain. One can recognise a Piwi domain in the interval Leu-509–Val-820. The tract at residues Asp-825–Lys-846 is disordered.

It belongs to the argonaute family. Ago subfamily. Interacts with EIF4B, IMP8, PRMT5, TNRC6A and TNRC6B. Interacts with ZFP36. In terms of processing, ubiquitinated on surface-exposed lysines by a SCF-like E3 ubiquitin-protein ligase complex containing ZSWIM8 during target-directed microRNA degradation (TDMD), a process that mediates degradation of microRNAs (miRNAs). Ubiquitination by the SCF-like E3 ubiquitin-protein ligase complex containing ZSWIM8 leads to its subsequent degradation, thereby exposing miRNAs for degradation. ZSWIM8 recognizes and binds AGO4 when it is engaged with a TDMD target.

The protein localises to the cytoplasm. It localises to the P-body. Its function is as follows. Required for RNA-mediated gene silencing (RNAi). Binds to short RNAs such as microRNAs (miRNAs) and represses the translation of mRNAs which are complementary to them. Lacks endonuclease activity and does not appear to cleave target mRNAs. In Mus musculus (Mouse), this protein is Protein argonaute-4 (Ago4).